The sequence spans 197 residues: NADH-quinone oxidoreductase subunit C (197 aa).

It belongs to the complex I 30 kDa subunit family. In terms of assembly, NDH-1 is composed of 14 different subunits. Subunits NuoB, C, D, E, F, and G constitute the peripheral sector of the complex.

It is found in the cell inner membrane. It carries out the reaction a quinone + NADH + 5 H(+)(in) = a quinol + NAD(+) + 4 H(+)(out). Functionally, NDH-1 shuttles electrons from NADH, via FMN and iron-sulfur (Fe-S) centers, to quinones in the respiratory chain. The immediate electron acceptor for the enzyme in this species is believed to be ubiquinone. Couples the redox reaction to proton translocation (for every two electrons transferred, four hydrogen ions are translocated across the cytoplasmic membrane), and thus conserves the redox energy in a proton gradient. The sequence is that of NADH-quinone oxidoreductase subunit C from Rickettsia prowazekii (strain Madrid E).